The primary structure comprises 56 residues: Large ribosomal subunit protein bL33 (56 aa).

Residues 1–12 (MATKGGREKIKL) show a composition bias toward basic and acidic residues. Residues 1–28 (MATKGGREKIKLESTAGTGHFYTTSKNK) are disordered. Over residues 15–25 (TAGTGHFYTTS) the composition is skewed to polar residues.

This sequence belongs to the bacterial ribosomal protein bL33 family.

This Albidiferax ferrireducens (strain ATCC BAA-621 / DSM 15236 / T118) (Rhodoferax ferrireducens) protein is Large ribosomal subunit protein bL33.